A 239-amino-acid chain; its full sequence is LexA repressor (239 aa).

A DNA-binding region (H-T-H motif) is located at residues 26-46 (FDEMKDALDLASKSGIHRLIT). Active-site for autocatalytic cleavage activity residues include S159 and K197.

Belongs to the peptidase S24 family. Homodimer.

It catalyses the reaction Hydrolysis of Ala-|-Gly bond in repressor LexA.. Represses a number of genes involved in the response to DNA damage (SOS response), including recA and lexA. In the presence of single-stranded DNA, RecA interacts with LexA causing an autocatalytic cleavage which disrupts the DNA-binding part of LexA, leading to derepression of the SOS regulon and eventually DNA repair. The polypeptide is LexA repressor (Rhizobium etli (strain CIAT 652)).